A 454-amino-acid chain; its full sequence is uncharacterized protein (454 aa).

This is an uncharacterized protein from Rickettsia prowazekii (strain Madrid E).